Here is a 299-residue protein sequence, read N- to C-terminus: NAD kinase (299 aa).

The active-site Proton acceptor is the aspartate 71. Residues 71 to 72, 145 to 146, arginine 173, aspartate 175, 186 to 191, alanine 210, and glutamine 248 each bind NAD(+); these read DG, ND, and TAYSLS.

It belongs to the NAD kinase family. Requires a divalent metal cation as cofactor.

The protein localises to the cytoplasm. The enzyme catalyses NAD(+) + ATP = ADP + NADP(+) + H(+). Involved in the regulation of the intracellular balance of NAD and NADP, and is a key enzyme in the biosynthesis of NADP. Catalyzes specifically the phosphorylation on 2'-hydroxyl of the adenosine moiety of NAD to yield NADP. The sequence is that of NAD kinase from Bordetella bronchiseptica (strain ATCC BAA-588 / NCTC 13252 / RB50) (Alcaligenes bronchisepticus).